We begin with the raw amino-acid sequence, 863 residues long: Dipeptidyl peptidase 9 (863 aa).

The segment at 1 to 20 (MATTGTPTADRGDAAATDDP) is disordered. The residue at position 2 (alanine 2) is an N-acetylalanine. Active-site charge relay system residues include serine 730, aspartate 808, and histidine 840. Serine 730 contributes to the Val-boroPro binding site.

It belongs to the peptidase S9B family. DPPIV subfamily. As to quaternary structure, homodimer. Forms a ternary complex with NLRP1, composed of a DPP9 homodimer, one full-length NLRP1 protein, and one cleaved C-terminus of NLRP1 (NACHT, LRR and PYD domains-containing protein 1, C-terminus). Forms a ternary complex with CARD8, composed of a DPP9 homodimer, one full-length NLRP1 protein, and one cleaved C-terminus of CARD8 (Caspase recruitment domain-containing protein 8, C-terminus). In the ternary complex, only one subunit of the DPP9 homodimer is bound to NLRP1 or CARD8. In terms of tissue distribution, ubiquitously expressed, with highest levels in liver, heart and muscle, and lowest levels in brain.

It localises to the cytoplasm. The protein resides in the cytosol. It is found in the nucleus. It carries out the reaction Release of an N-terminal dipeptide, Xaa-Yaa-|-Zaa-, from a polypeptide, preferentially when Yaa is Pro, provided Zaa is neither Pro nor hydroxyproline.. Its activity is regulated as follows. Inhibited by the serine proteinase inhibitor 4-(2-aminoethyl)benzenesulphonyl fluoride (AEBSF), and by di-isopropylfluorophosphate. Inhibited by Val-boroPro (Talabostat, PT-100), a non-selective inhibitor, which triggers pyroptosis in monocytes and macrophages. Val-boroPro inhibits activity by binding to the active site, mimicking a substrate-bound state, thereby displacing the C-terminal fragment of NLRP1, leading to activation of the NLRP1 inflammasome. In contrast, Val-boroPro does not directly displaces CARD8: it acts by promoting degradation of the N-terminal part of CARD8, leading to indirect disruption of the ternary complex. Chemical inhibition of DPP9 by Val-boroPro in HIV-1-infected cells activates the CARD8 inflammasome, triggering cell death, offering a promising strategy for the elimination of HIV-1 reservoirs in people living with HIV-1. Functionally, dipeptidyl peptidase that cleaves off N-terminal dipeptides from proteins having a Pro or Ala residue at position 2. Acts as a key inhibitor of caspase-1-dependent monocyte and macrophage pyroptosis in resting cells by preventing activation of NLRP1 and CARD8. Sequesters the cleaved C-terminal part of NLRP1 and CARD8, which respectively constitute the active part of the NLRP1 and CARD8 inflammasomes, in a ternary complex, thereby preventing their oligomerization and activation. The dipeptidyl peptidase activity is required to suppress NLRP1 and CARD8; however, neither NLRP1 nor CARD8 are bona fide substrates of DPP9, suggesting the existence of substrate(s) required for NLRP1 and CARD8 inhibition. This is Dipeptidyl peptidase 9 from Homo sapiens (Human).